Consider the following 171-residue polypeptide: Co-chaperone protein HscB homolog (171 aa).

The 73-residue stretch at 2 to 74 (NHFELFGLPS…ISRAEYILAE (73 aa)) folds into the J domain.

This sequence belongs to the HscB family. Interacts with HscA and stimulates its ATPase activity.

Functionally, co-chaperone involved in the maturation of iron-sulfur cluster-containing proteins. Seems to help targeting proteins to be folded toward HscA. In Vibrio parahaemolyticus serotype O3:K6 (strain RIMD 2210633), this protein is Co-chaperone protein HscB homolog.